A 299-amino-acid polypeptide reads, in one-letter code: tRNA dimethylallyltransferase (299 aa).

Residue 13–20 participates in ATP binding; the sequence is GPTASGKT. 15 to 20 is a substrate binding site; that stretch reads TASGKT. Positions 38–41 are interaction with substrate tRNA; sequence DSRQ.

Belongs to the IPP transferase family. Monomer. Mg(2+) is required as a cofactor.

The enzyme catalyses adenosine(37) in tRNA + dimethylallyl diphosphate = N(6)-dimethylallyladenosine(37) in tRNA + diphosphate. In terms of biological role, catalyzes the transfer of a dimethylallyl group onto the adenine at position 37 in tRNAs that read codons beginning with uridine, leading to the formation of N6-(dimethylallyl)adenosine (i(6)A). This Prochlorococcus marinus (strain MIT 9515) protein is tRNA dimethylallyltransferase.